Here is a 113-residue protein sequence, read N- to C-terminus: Transcriptional regulator RamA (113 aa).

The 99-residue stretch at 9–107 folds into the HTH araC/xylS-type domain; sequence DTIVEWIDDN…NQPPGAYRKE (99 aa). 2 DNA-binding regions (H-T-H motif) span residues 26-47 and 74-97; these read DDIARHAGYSKWHLQRLFLQYK and VYDICLKYGFDSQQTFTRVFTRTF.

As to quaternary structure, monomer. Interacts with the C-terminus of RNAP subunit RpoA when part of class I or class II promoter complexes. Also interacts with sigma-70/RpoD in class II promoter complexes.

Transcriptional regulator. Binds to regulatory regions of target genes, including its own gene, efflux pump operon acrAB, antisense RNA gene micF, and various genes involved in lipid A biosynthesis, including lpxO and lpxL-2. Regulates expression of many genes, perhaps including its own; activates various lipid A biosynthetic genes, and as a result of activating acrAB, confers multidrug resistance. Plays a role in virulence and survival in host cells. The protein is Transcriptional regulator RamA of Klebsiella pneumoniae subsp. pneumoniae (strain HS11286).